The primary structure comprises 178 residues: CDP-archaeol synthase (178 aa).

5 helical membrane passes run 3–23 (LLLL…ANAV), 56–76 (FFGI…VILY), 87–107 (LFGY…GDML), 123–145 (APIL…FYPL), and 150–169 (IVLL…IIAY).

The protein belongs to the CDP-archaeol synthase family. It depends on Mg(2+) as a cofactor.

The protein localises to the cell membrane. The enzyme catalyses 2,3-bis-O-(geranylgeranyl)-sn-glycerol 1-phosphate + CTP + H(+) = CDP-2,3-bis-O-(geranylgeranyl)-sn-glycerol + diphosphate. It functions in the pathway membrane lipid metabolism; glycerophospholipid metabolism. Functionally, catalyzes the formation of CDP-2,3-bis-(O-geranylgeranyl)-sn-glycerol (CDP-archaeol) from 2,3-bis-(O-geranylgeranyl)-sn-glycerol 1-phosphate (DGGGP) and CTP. This reaction is the third ether-bond-formation step in the biosynthesis of archaeal membrane lipids. This is CDP-archaeol synthase from Methanococcus maripaludis (strain C6 / ATCC BAA-1332).